Consider the following 318-residue polypeptide: Phospho-N-acetylmuramoyl-pentapeptide-transferase (318 aa).

The next 10 membrane-spanning stretches (helical) occupy residues 5–25, 50–70, 71–91, 115–135, 139–159, 173–193, 198–218, 222–242, 248–268, and 298–318; these read LKPL…VLAF, PTMG…VLAP, PSPL…IGLV, VLLG…GSVI, VTGW…LLLV, GLAA…ALTL, LVTF…YNFH, VFMG…LAIM, VLPV…LQVV, and VLFF…LLTI.

The protein belongs to the glycosyltransferase 4 family. MraY subfamily. The cofactor is Mg(2+).

The protein localises to the cell membrane. The catalysed reaction is UDP-N-acetyl-alpha-D-muramoyl-L-alanyl-gamma-D-glutamyl-meso-2,6-diaminopimeloyl-D-alanyl-D-alanine + di-trans,octa-cis-undecaprenyl phosphate = di-trans,octa-cis-undecaprenyl diphospho-N-acetyl-alpha-D-muramoyl-L-alanyl-D-glutamyl-meso-2,6-diaminopimeloyl-D-alanyl-D-alanine + UMP. It functions in the pathway cell wall biogenesis; peptidoglycan biosynthesis. Its function is as follows. Catalyzes the initial step of the lipid cycle reactions in the biosynthesis of the cell wall peptidoglycan: transfers peptidoglycan precursor phospho-MurNAc-pentapeptide from UDP-MurNAc-pentapeptide onto the lipid carrier undecaprenyl phosphate, yielding undecaprenyl-pyrophosphoryl-MurNAc-pentapeptide, known as lipid I. This is Phospho-N-acetylmuramoyl-pentapeptide-transferase from Moorella thermoacetica (strain ATCC 39073 / JCM 9320).